The following is an 863-amino-acid chain: Nitrate reductase [NADH] (863 aa).

Cys137 is a Mo-molybdopterin binding site. The Cytochrome b5 heme-binding domain maps to 484 to 559 (KKYVTKAMLE…LEQFYIAELA (76 aa)). Heme-binding residues include His519 and His542. One can recognise an FAD-binding FR-type domain in the interval 602-719 (KKQKAAELKE…KGPIGHFHYD (118 aa)). FAD contacts are provided by residues 659-662 (RAYT), 676-680 (VVKIY), Phe688, 693-695 (KFS), and Thr746.

This sequence belongs to the nitrate reductase family. Homodimer. FAD is required as a cofactor. It depends on Mo-molybdopterin as a cofactor. The cofactor is heme.

The enzyme catalyses nitrite + NAD(+) + H2O = nitrate + NADH + H(+). In terms of biological role, nitrate reductase is a key enzyme involved in the first step of nitrate assimilation in plants, fungi and bacteria. The chain is Nitrate reductase [NADH] from Ulva prolifera (Green seaweed).